The sequence spans 286 residues: Beta-lactamase SHV-34 (286 aa).

A signal peptide spans Met1–Ala21. Residue Ser66 is the Acyl-ester intermediate of the active site. Cys73 and Cys119 are oxidised to a cystine. Residue Glu164 is the Proton acceptor of the active site. Position 230–232 (Lys230–Gly232) interacts with substrate.

It belongs to the class-A beta-lactamase family.

It catalyses the reaction a beta-lactam + H2O = a substituted beta-amino acid. Its function is as follows. Hydrolyzes ceftazidime and cefotaxime. This chain is Beta-lactamase SHV-34 (bla), found in Escherichia coli.